The primary structure comprises 622 residues: Auxin efflux carrier component 1 (622 aa).

At M1 to D6 the chain is on the extracellular side. The chain crosses the membrane as a helical span at residues F7 to S27. The Cytoplasmic portion of the chain corresponds to V28–R44. A helical membrane pass occupies residues F45–Y65. V51 serves as a coordination point for (indol-3-yl)acetate. At A66–R70 the chain is on the extracellular side. A helical transmembrane segment spans residues F71–K91. Residues L92–W100 are Cytoplasmic-facing. Residues T101–L121 form a helical membrane-spanning segment. Positions 112 and 114 each coordinate (indol-3-yl)acetate. Residues K122 to D131 are Extracellular-facing. The N-linked (GlcNAc...) asparagine glycan is linked to N127. Residues L132–F152 traverse the membrane as a helical segment. Residue Y145 coordinates (indol-3-yl)acetate. Residues E153 to S482 are Cytoplasmic-facing. Phosphoserine occurs at positions 209, 212, 221, and 225. Positions R213–L233 are disordered. At T227 the chain carries Phosphothreonine. At S231 the chain carries Phosphoserine. The residue at position 248 (T248) is a Phosphothreonine. Phosphoserine occurs at positions 252, 253, and 271. The interval G268–G362 is disordered. T286 is subject to Phosphothreonine. S290 is subject to Phosphoserine. Residues P298 to G311 show a composition bias toward low complexity. T302 bears the Phosphothreonine mark. Phosphoserine occurs at positions 317, 320, and 337. A Phosphothreonine modification is found at T340. Residues S374, S377, S408, S414, S426, S434, and S446 each carry the phosphoserine modification. Residues L483–I503 form a helical membrane-spanning segment. Residues A504–S506 lie on the Extracellular side of the membrane. The chain crosses the membrane as a helical span at residues I507–A527. At L528 to A541 the chain is on the cytoplasmic side. The helical transmembrane segment at F542–V562 threads the bilayer. The Extracellular portion of the chain corresponds to G563 to G566. The chain crosses the membrane as a helical span at residues V567–F587. I582 and V583 together coordinate (indol-3-yl)acetate. Over A588–A601 the chain is Cytoplasmic. A helical membrane pass occupies residues V602–L622.

The protein belongs to the auxin efflux carrier (TC 2.A.69.1) family. In terms of assembly, homodimer. Interacts with TOPP4. Interacts with FYPP1 and FYPP3. Component of a complex made of PINs (e.g. PIN1 and PIN2), MAB4/MELs (e.g. NPY1/MAB4 and NPY5/MEL1) and AGC kinases (e.g. D6PK and PID) at the plasma membrane. Binds directly to NPY5/MEL1. Expressed at the basal side of elongated parenchymatous xylem cells.

It localises to the cell membrane. Its activity is regulated as follows. Auxin efflux carrier activity is competitively inhibited by naptalamate (N-1-naphthylphthalamic acid, NPA) but activated by D6PK-mediated phosphorylation. Functionally, acts as a component of the auxin efflux carrier; this activity is enhanced when activated by D6PK-mediated phosphorylation. Binds auxins including indole-3-acetic acid (IAA), indole-3-butyric acid (IBA), indole-3-propionic acid (IPA) and 4-chloroindole-3-acetic acid (4-Cl-IAA). Seems to be involved in the basipetal auxin transport. Mediates the formation of auxin gradient which is required to ensure correct organogenesis. Coordinated polar localization of PIN1 is directly regulated by the vesicle trafficking process and apical-basal PIN1 polarity also depends on the phosphorylation of conserved serine residues by PID kinase. The ARF-GEF protein GNOM is required for the correct recycling of PIN1 between the plasma membrane and endosomal compartments. Recrutes NPY proteins (e.g. NPY1/MAB4 and NPY5/MEL1) to the plasma membrane in a polar basal localization in root epidermis; this activity is optimized by AGC kinases-mediated (e.g. D6PK and PID) phosphorylation that limits their lateral diffusion-based escape. In Arabidopsis thaliana (Mouse-ear cress), this protein is Auxin efflux carrier component 1.